A 355-amino-acid chain; its full sequence is UDP-N-acetylglucosamine--N-acetylmuramyl-(pentapeptide) pyrophosphoryl-undecaprenol N-acetylglucosamine transferase (355 aa).

UDP-N-acetyl-alpha-D-glucosamine-binding positions include threonine 15–glycine 17, asparagine 127, arginine 163, serine 191, isoleucine 244, alanine 263–glutamate 268, and glutamine 288.

Belongs to the glycosyltransferase 28 family. MurG subfamily.

The protein resides in the cell inner membrane. It carries out the reaction di-trans,octa-cis-undecaprenyl diphospho-N-acetyl-alpha-D-muramoyl-L-alanyl-D-glutamyl-meso-2,6-diaminopimeloyl-D-alanyl-D-alanine + UDP-N-acetyl-alpha-D-glucosamine = di-trans,octa-cis-undecaprenyl diphospho-[N-acetyl-alpha-D-glucosaminyl-(1-&gt;4)]-N-acetyl-alpha-D-muramoyl-L-alanyl-D-glutamyl-meso-2,6-diaminopimeloyl-D-alanyl-D-alanine + UDP + H(+). It participates in cell wall biogenesis; peptidoglycan biosynthesis. Cell wall formation. Catalyzes the transfer of a GlcNAc subunit on undecaprenyl-pyrophosphoryl-MurNAc-pentapeptide (lipid intermediate I) to form undecaprenyl-pyrophosphoryl-MurNAc-(pentapeptide)GlcNAc (lipid intermediate II). The polypeptide is UDP-N-acetylglucosamine--N-acetylmuramyl-(pentapeptide) pyrophosphoryl-undecaprenol N-acetylglucosamine transferase (Photorhabdus laumondii subsp. laumondii (strain DSM 15139 / CIP 105565 / TT01) (Photorhabdus luminescens subsp. laumondii)).